Reading from the N-terminus, the 788-residue chain is Protein translocase subunit SecA 2 (788 aa).

ATP-binding positions include Gln-77, 95 to 99 (GEGKT), and Asp-491.

This sequence belongs to the SecA family. As to quaternary structure, monomer and homodimer. Part of the essential Sec protein translocation apparatus which comprises SecA, SecYEG and auxiliary proteins SecDF. Other proteins may also be involved.

It is found in the cell membrane. Its subcellular location is the cytoplasm. It carries out the reaction ATP + H2O + cellular proteinSide 1 = ADP + phosphate + cellular proteinSide 2.. In terms of biological role, part of the Sec protein translocase complex. Interacts with the SecYEG preprotein conducting channel. Has a central role in coupling the hydrolysis of ATP to the transfer of proteins into and across the cell membrane, serving as an ATP-driven molecular motor driving the stepwise translocation of polypeptide chains across the membrane. This chain is Protein translocase subunit SecA 2, found in Lactobacillus johnsonii (strain CNCM I-12250 / La1 / NCC 533).